A 64-amino-acid chain; its full sequence is Large ribosomal subunit protein bL35 (64 aa).

The interval 19-41 (SGKVKRERMNGSHNLEHKNRKRT) is disordered. Positions 25–35 (ERMNGSHNLEH) are enriched in basic and acidic residues.

It belongs to the bacterial ribosomal protein bL35 family.

The polypeptide is Large ribosomal subunit protein bL35 (Chlorobaculum tepidum (strain ATCC 49652 / DSM 12025 / NBRC 103806 / TLS) (Chlorobium tepidum)).